The following is a 316-amino-acid chain: Transaldolase (316 aa).

Catalysis depends on K131, which acts as the Schiff-base intermediate with substrate.

It belongs to the transaldolase family. Type 1 subfamily. Homodimer.

The protein resides in the cytoplasm. It catalyses the reaction D-sedoheptulose 7-phosphate + D-glyceraldehyde 3-phosphate = D-erythrose 4-phosphate + beta-D-fructose 6-phosphate. It functions in the pathway carbohydrate degradation; pentose phosphate pathway; D-glyceraldehyde 3-phosphate and beta-D-fructose 6-phosphate from D-ribose 5-phosphate and D-xylulose 5-phosphate (non-oxidative stage): step 2/3. Its function is as follows. Transaldolase is important for the balance of metabolites in the pentose-phosphate pathway. This chain is Transaldolase, found in Buchnera aphidicola subsp. Baizongia pistaciae (strain Bp).